Consider the following 237-residue polypeptide: Lectin (237 aa).

Residues E8 and D10 each coordinate Mn(2+). 4 residues coordinate Ca(2+): D10, Y12, N14, and D19. Residues Y12 and N14 each coordinate a carbohydrate. Residues D19 and H24 each coordinate Mn(2+). Position 98-100 (G98–Y100) interacts with a carbohydrate. D208 contributes to the Ca(2+) binding site. A carbohydrate-binding residues include G227 and R228.

The protein belongs to the leguminous lectin family. In terms of assembly, homotetramer; dimer of dimers. Concanavalin A-like lectins of the Diocleinae subtribe undergo proteolytic processing referred to as circular permutation. The propeptide is split into an N-terminal and a C-terminal part, the gamma and beta chain, respectively. These are then religated in beta-gamma order to form the mature alpha chain. The beta and gamma chains can often be detected in cell extracts. Residues 1-118 of the mature chain, as displayed here, probably constitute the beta chain in the propeptide, residues 119-237 the gamma chain.

D-mannose/D-glucose-binding lectin with hemagglutinating activity towards rabbit and human erythrocytes. In rats, induces dose-dependent paw edema. Has low cytotoxicity against Artemisia sp. This Macropsychanthus comosus (Sea purse) protein is Lectin.